The following is a 537-amino-acid chain: Ataxin-10 homolog (537 aa).

The protein belongs to the ataxin-10 family.

The protein localises to the cytoplasm. Its function is as follows. May play a role in the regulation of cytokinesis. The polypeptide is Ataxin-10 homolog (CTR86) (Kluyveromyces lactis (strain ATCC 8585 / CBS 2359 / DSM 70799 / NBRC 1267 / NRRL Y-1140 / WM37) (Yeast)).